Here is a 413-residue protein sequence, read N- to C-terminus: NADH-quinone oxidoreductase subunit D (413 aa).

Belongs to the complex I 49 kDa subunit family. In terms of assembly, NDH-1 is composed of 14 different subunits. Subunits NuoB, C, D, E, F, and G constitute the peripheral sector of the complex.

Its subcellular location is the cell inner membrane. The catalysed reaction is a quinone + NADH + 5 H(+)(in) = a quinol + NAD(+) + 4 H(+)(out). In terms of biological role, NDH-1 shuttles electrons from NADH, via FMN and iron-sulfur (Fe-S) centers, to quinones in the respiratory chain. The immediate electron acceptor for the enzyme in this species is believed to be ubiquinone. Couples the redox reaction to proton translocation (for every two electrons transferred, four hydrogen ions are translocated across the cytoplasmic membrane), and thus conserves the redox energy in a proton gradient. The polypeptide is NADH-quinone oxidoreductase subunit D (Rhodobacter capsulatus (Rhodopseudomonas capsulata)).